A 284-amino-acid chain; its full sequence is Tropomyosin alpha-3 chain (284 aa).

Methionine 1 is subject to N-acetylmethionine. The tract at residues 1-40 (MEAIKKKMQMLKLDKENALDRAEQAEAEQKQAEERSKQLE) is disordered. Residues 1 to 284 (MEAIKKKMQM…DHALNDMTSI (284 aa)) are a coiled coil. A compositionally biased stretch (basic and acidic residues) spans 12-40 (KLDKENALDRAEQAEAEQKQAEERSKQLE). Threonine 53 is modified (phosphothreonine). Phosphoserine occurs at positions 61 and 87. Phosphothreonine occurs at positions 108 and 252. Tyrosine 261 is modified (phosphotyrosine). Serine 271 carries the phosphoserine modification. The residue at position 282 (threonine 282) is a Phosphothreonine. Phosphoserine is present on serine 283.

Belongs to the tropomyosin family. Homodimer. Heterodimer of an alpha (TPM1, TPM3 or TPM4) and a beta (TPM2) chain. Interacts with TMOD1. Interacts with TNNT1.

Its subcellular location is the cytoplasm. The protein localises to the cytoskeleton. In terms of biological role, binds to actin filaments in muscle and non-muscle cells. Plays a central role, in association with the troponin complex, in the calcium dependent regulation of vertebrate striated muscle contraction. Smooth muscle contraction is regulated by interaction with caldesmon. In non-muscle cells is implicated in stabilizing cytoskeleton actin filaments. The sequence is that of Tropomyosin alpha-3 chain (TPM3) from Sus scrofa (Pig).